The sequence spans 240 residues: Proteasome subunit alpha (240 aa).

This sequence belongs to the peptidase T1A family. As to quaternary structure, the 20S proteasome core is composed of 14 alpha and 14 beta subunits that assemble into four stacked heptameric rings, resulting in a barrel-shaped structure. The two inner rings, each composed of seven catalytic beta subunits, are sandwiched by two outer rings, each composed of seven alpha subunits. The catalytic chamber with the active sites is on the inside of the barrel. Has a gated structure, the ends of the cylinder being occluded by the N-termini of the alpha-subunits. Is capped at one or both ends by the proteasome regulatory ATPase, PAN.

Its subcellular location is the cytoplasm. The formation of the proteasomal ATPase PAN-20S proteasome complex, via the docking of the C-termini of PAN into the intersubunit pockets in the alpha-rings, triggers opening of the gate for substrate entry. Interconversion between the open-gate and close-gate conformations leads to a dynamic regulation of the 20S proteasome proteolysis activity. Its function is as follows. Component of the proteasome core, a large protease complex with broad specificity involved in protein degradation. In Metallosphaera sedula (strain ATCC 51363 / DSM 5348 / JCM 9185 / NBRC 15509 / TH2), this protein is Proteasome subunit alpha.